Consider the following 236-residue polypeptide: 4-aminobenzoate synthase (236 aa).

Residues Glu-87, His-94, Glu-148, His-180, Asp-184, and His-187 each coordinate Fe(2+).

It belongs to the CADD family. As to quaternary structure, homodimer. Requires Fe(2+) as cofactor. It depends on Mn(2+) as a cofactor.

Functionally, involved in de novo para-aminobenzoate (PABA) biosynthesis. Acts as a self-sacrificing or 'suicide' enzyme that utilizes its own active site tyrosine residue(s) as the substrate for PABA synthesis. The side chain of the tyrosine residue is released from the protein backbone via cleavage of the C(alpha)-C(beta) bond, leaving a glycine in place of the original tyrosine residue. Reaction requires O(2) and a reduced dimetal cofactor. The sequence is that of 4-aminobenzoate synthase from Chlamydia muridarum (strain MoPn / Nigg).